The following is a 76-amino-acid chain: uncharacterized protein (76 aa).

This is an uncharacterized protein from Bacillus subtilis (strain 168).